We begin with the raw amino-acid sequence, 440 residues long: Xaa-Pro dipeptidase (440 aa).

Aspartate 244, aspartate 255, histidine 335, glutamate 380, and glutamate 419 together coordinate Mn(2+).

Belongs to the peptidase M24B family. Bacterial-type prolidase subfamily. Mn(2+) is required as a cofactor.

The catalysed reaction is Xaa-L-Pro dipeptide + H2O = an L-alpha-amino acid + L-proline. In terms of biological role, splits dipeptides with a prolyl residue in the C-terminal position. This chain is Xaa-Pro dipeptidase, found in Shewanella halifaxensis (strain HAW-EB4).